We begin with the raw amino-acid sequence, 406 residues long: Cysteine desulfurase (406 aa).

N6-(pyridoxal phosphate)lysine is present on lysine 226. Cysteine 364 acts as the Cysteine persulfide intermediate in catalysis.

It belongs to the class-V pyridoxal-phosphate-dependent aminotransferase family. Csd subfamily. Homodimer. Interacts with SufE and the SufBCD complex composed of SufB, SufC and SufD. The interaction with SufE is required to mediate the direct transfer of the sulfur atom from the S-sulfanylcysteine. Requires pyridoxal 5'-phosphate as cofactor.

It localises to the cytoplasm. The enzyme catalyses (sulfur carrier)-H + L-cysteine = (sulfur carrier)-SH + L-alanine. The catalysed reaction is L-selenocysteine + AH2 = hydrogenselenide + L-alanine + A + H(+). Its pathway is cofactor biosynthesis; iron-sulfur cluster biosynthesis. Functionally, cysteine desulfurases mobilize the sulfur from L-cysteine to yield L-alanine, an essential step in sulfur metabolism for biosynthesis of a variety of sulfur-containing biomolecules. Component of the suf operon, which is activated and required under specific conditions such as oxidative stress and iron limitation. Acts as a potent selenocysteine lyase in vitro, that mobilizes selenium from L-selenocysteine. Selenocysteine lyase activity is however unsure in vivo. The protein is Cysteine desulfurase of Klebsiella pneumoniae subsp. pneumoniae (strain ATCC 700721 / MGH 78578).